The chain runs to 95 residues: Aspartyl/glutamyl-tRNA(Asn/Gln) amidotransferase subunit C (95 aa).

It belongs to the GatC family. In terms of assembly, heterotrimer of A, B and C subunits.

The enzyme catalyses L-glutamyl-tRNA(Gln) + L-glutamine + ATP + H2O = L-glutaminyl-tRNA(Gln) + L-glutamate + ADP + phosphate + H(+). It catalyses the reaction L-aspartyl-tRNA(Asn) + L-glutamine + ATP + H2O = L-asparaginyl-tRNA(Asn) + L-glutamate + ADP + phosphate + 2 H(+). Functionally, allows the formation of correctly charged Asn-tRNA(Asn) or Gln-tRNA(Gln) through the transamidation of misacylated Asp-tRNA(Asn) or Glu-tRNA(Gln) in organisms which lack either or both of asparaginyl-tRNA or glutaminyl-tRNA synthetases. The reaction takes place in the presence of glutamine and ATP through an activated phospho-Asp-tRNA(Asn) or phospho-Glu-tRNA(Gln). The polypeptide is Aspartyl/glutamyl-tRNA(Asn/Gln) amidotransferase subunit C (Rhodospirillum centenum (strain ATCC 51521 / SW)).